Consider the following 599-residue polypeptide: Elongation factor 4 (599 aa).

In terms of domain architecture, tr-type G spans 4-186; sequence EHIRNFSIIA…EIVKKIPPPK (183 aa). Residues 16-21 and 133-136 contribute to the GTP site; these read DHGKST and NKID.

It belongs to the TRAFAC class translation factor GTPase superfamily. Classic translation factor GTPase family. LepA subfamily.

It is found in the cell inner membrane. The enzyme catalyses GTP + H2O = GDP + phosphate + H(+). Its function is as follows. Required for accurate and efficient protein synthesis under certain stress conditions. May act as a fidelity factor of the translation reaction, by catalyzing a one-codon backward translocation of tRNAs on improperly translocated ribosomes. Back-translocation proceeds from a post-translocation (POST) complex to a pre-translocation (PRE) complex, thus giving elongation factor G a second chance to translocate the tRNAs correctly. Binds to ribosomes in a GTP-dependent manner. The protein is Elongation factor 4 of Citrifermentans bemidjiense (strain ATCC BAA-1014 / DSM 16622 / JCM 12645 / Bem) (Geobacter bemidjiensis).